Reading from the N-terminus, the 243-residue chain is Myelin protein P0 (243 aa).

An N-terminal signal peptide occupies residues 1-26 (MESSGLRAPCSLLVLLSALVLPPTLA). An Ig-like V-type domain is found at 27–141 (IEVYTDREVY…VGKSSYVHLQ (115 aa)). The Extracellular segment spans residues 27-154 (IEVYTDREVY…KGAARAGLVL (128 aa)). Cysteine 47 and cysteine 123 form a disulfide bridge. A glycan (N-linked (GlcNAc...) asparagine) is linked at asparagine 118. The helical transmembrane segment at 155-175 (GIIIAVALALVIVVTILILLI) threads the bilayer. The Cytoplasmic portion of the chain corresponds to 176 to 243 (RYCWLRRQVR…GIGDSRKDRK (68 aa)). The interval 201 to 243 (AKDSSKRSSRQTPILYAMLDQTRGKASEKKGKGGIGDSRKDRK) is disordered. The span at 222 to 243 (TRGKASEKKGKGGIGDSRKDRK) shows a compositional bias: basic and acidic residues.

The protein belongs to the myelin P0 protein family.

It localises to the cell membrane. Creation of an extracellular membrane face which guides the wrapping process and ultimately compacts adjacent lamellae. The chain is Myelin protein P0 (mpz) from Xenopus tropicalis (Western clawed frog).